Reading from the N-terminus, the 609-residue chain is Zinc metalloproteinase-disintegrin-like (609 aa).

A signal peptide spans 1-20; the sequence is MIQVLLVTICLAALPYQGSS. Positions 21–189 are excised as a propeptide; sequence IILESGNVND…KKASQLVVTA (169 aa). Residues 198-393 enclose the Peptidase M12B domain; it reads RFVELVLVVD…QNPECIVNEP (196 aa). 2 residues coordinate Ca(2+): E201 and D285. Cystine bridges form between C308/C388, C348/C372, and C350/C355. H333 is a Zn(2+) binding site. The active site involves E334. Residues H337 and H343 each contribute to the Zn(2+) site. N-linked (GlcNAc...) asparagine glycosylation is present at N371. Positions 388, 391, 403, 406, 408, 410, 413, and 416 each coordinate Ca(2+). The region spanning 401–487 is the Disintegrin domain; sequence PPVCGNELLE…ECPADVFHKN (87 aa). Disulfide bonds link C404/C433, C415/C428, C417/C423, C427/C450, C441/C447, C446/C472, C459/C479, C466/C498, C491/C503, C510/C560, C525/C571, C538/C548, C555/C597, and C591/C602. Residues 465–467 carry the D/ECD-tripeptide motif; that stretch reads ECD. Positions 467, 468, 470, 482, and 483 each coordinate Ca(2+).

This sequence belongs to the venom metalloproteinase (M12B) family. P-III subfamily. P-IIIa sub-subfamily. As to quaternary structure, monomer. Zn(2+) is required as a cofactor. In terms of tissue distribution, expressed by the venom gland.

It localises to the secreted. Functionally, this protein is a zinc metalloprotease from snake venom that possesses hemorrhagic activity. The polypeptide is Zinc metalloproteinase-disintegrin-like (Crotalus durissus durissus (Central American rattlesnake)).